Consider the following 129-residue polypeptide: uncharacterized protein (129 aa).

This is an uncharacterized protein from Methanocaldococcus jannaschii (strain ATCC 43067 / DSM 2661 / JAL-1 / JCM 10045 / NBRC 100440) (Methanococcus jannaschii).